The chain runs to 343 residues: L-rhamnose-proton symporter (343 aa).

10 helical membrane-spanning segments follow: residues 4-24 (AIIL…CFYA), 38-58 (WSIG…YLLL), 68-88 (FSIA…IGNI), 101-121 (MGIG…TPIL), 137-157 (TLLG…AGLL), 175-195 (LILA…MDAA), 207-227 (INSL…GAII), 254-274 (LLIT…LQFF), 289-309 (MSWM…GLLL), and 320-340 (VAVL…VGLG).

Belongs to the L-rhamnose transporter (TC 2.A.7.6) family.

Its subcellular location is the cell inner membrane. It catalyses the reaction L-rhamnopyranose(in) + H(+)(in) = L-rhamnopyranose(out) + H(+)(out). In terms of biological role, uptake of L-rhamnose across the cytoplasmic membrane with the concomitant transport of protons into the cell (symport system). The polypeptide is L-rhamnose-proton symporter (Yersinia pestis bv. Antiqua (strain Antiqua)).